A 323-amino-acid polypeptide reads, in one-letter code: rRNA 2'-O-methyltransferase fibrillarin (323 aa).

Residues 1 to 80 (MGFERGGRGG…AKGGAAGKKV (80 aa)) are disordered. 16 positions are modified to asymmetric dimethylarginine: Arg-5, Arg-8, Arg-12, Arg-16, Arg-23, Arg-26, Arg-30, Arg-34, Arg-41, Arg-47, Arg-49, Arg-53, Arg-57, Arg-62, Arg-64, and Arg-68. Positions 8–76 (RGGARGGGRG…ARGGAKGGAA (69 aa)) are enriched in gly residues. Residues 174 to 175 (TS), 193 to 194 (EF), 218 to 219 (DA), and 238 to 241 (DVAQ) contribute to the S-adenosyl-L-methionine site.

Belongs to the methyltransferase superfamily. Fibrillarin family. In terms of assembly, component of box C/D small nucleolar ribonucleoprotein (snoRNP) particles. By homology to other fibrillarins, some or all of the N-terminal domain arginines are modified to asymmetric dimethylarginine (DMA).

The protein resides in the nucleus. It is found in the nucleolus. The catalysed reaction is L-glutaminyl-[histone H2A] + S-adenosyl-L-methionine = N(5)-methyl-L-glutaminyl-[histone H2A] + S-adenosyl-L-homocysteine + H(+). S-adenosyl-L-methionine-dependent methyltransferase that has the ability to methylate both RNAs and proteins. Involved in pre-rRNA processing. Utilizes the methyl donor S-adenosyl-L-methionine to catalyze the site-specific 2'-hydroxyl methylation of ribose moieties in pre-ribosomal RNA. Site specificity is provided by a guide RNA that base pairs with the substrate. Methylation occurs at a characteristic distance from the sequence involved in base pairing with the guide RNA. Also acts as a protein methyltransferase by mediating methylation of 'Gln-105' of histone H2A (H2AQ105me), a modification that impairs binding of the FACT complex and is specifically present at 35S ribosomal DNA locus. This Neurospora crassa (strain ATCC 24698 / 74-OR23-1A / CBS 708.71 / DSM 1257 / FGSC 987) protein is rRNA 2'-O-methyltransferase fibrillarin (nop-1).